The following is a 511-amino-acid chain: ESX-1 secretion system protein EccD1 (511 aa).

Ser2 carries the post-translational modification N-acetylserine. Over 2–143 (SAPAVAAGPT…PEFDRTALNR (142 aa)) the chain is Cytoplasmic. A helical membrane pass occupies residues 144–164 (FVGAAIPLLTAPVIGMAMRAW). Residues 165 to 170 (WETGRS) are Periplasmic-facing. The chain crosses the membrane as a helical span at residues 171–191 (LWWPLAIGILGIAVLVGSFVA). Topologically, residues 192–202 (NRFYQSGHLAE) are cytoplasmic. The helical transmembrane segment at 203–223 (CLLVTTYLLIATAAALAVPLP) threads the bilayer. Over 224-227 (RGVN) the chain is Periplasmic. A helical transmembrane segment spans residues 228 to 248 (SLGAPQVAGAATAVLFLTLMT). Residues 249–257 (RGGPRKRHE) lie on the Cytoplasmic side of the membrane. Residues 258 to 278 (LASFAVITAIAVIAAAAAFGY) form a helical membrane-spanning segment. Over 279-285 (GYQDWVP) the chain is Periplasmic. The chain crosses the membrane as a helical span at residues 286–306 (AGGIAFGLFIVTNAAKLTVAV). The Cytoplasmic segment spans residues 307 to 367 (ARIALPPIPV…TERSKLAKQL (61 aa)). A run of 2 helical transmembrane segments spans residues 368 to 388 (LIGYVTSGTLILAAGAIAVVV) and 389 to 409 (RGHFFVHSLVVAGLITTVCGF). Residues 410–420 (RSRLYAERWCA) are Cytoplasmic-facing. Residues 421–441 (WALLAATVAIPTGLTAKLIIW) form a helical membrane-spanning segment. The Periplasmic segment spans residues 442–444 (YPH). A helical transmembrane segment spans residues 445–465 (YAWLLLSVYLTVALVALVVVG). The Cytoplasmic portion of the chain corresponds to 466-482 (SMAHVRRVSPVVKRTLE). A helical membrane pass occupies residues 483–503 (LIDGAMIAAIIPMLLWITGVY). Topologically, residues 504–511 (DTVRNIRF) are periplasmic.

It belongs to the EccD/Snm4 family. Possibly a homodimer. Part of the ESX-1 / type VII secretion system (T7SS), which is composed of cytosolic and membrane components. The ESX-1 membrane complex is composed of EccB1, EccCa1, EccCb1, EccD1 and EccE1.

It localises to the cell inner membrane. Its function is as follows. Part of the ESX-1 specialized secretion system, which delivers several virulence factors to host cells during infection, including the key virulence factors EsxA (ESAT-6) and EsxB (CFP-10). The sequence is that of ESX-1 secretion system protein EccD1 from Mycobacterium tuberculosis (strain ATCC 25618 / H37Rv).